The chain runs to 620 residues: Origin recognition complex subunit 2 (620 aa).

The disordered stretch occupies residues 1–184 (MLNGEDFVEH…PSKKSLTTNH (184 aa)). Over residues 13 to 23 (ILSSPAKSRNV) the composition is skewed to polar residues. Over residues 26–36 (KRVDPHGERQL) the composition is skewed to basic and acidic residues. Threonine 60 is subject to Phosphothreonine. Residues 83-101 (KIQEELTDRIKKDEKDTIS) show a composition bias toward basic and acidic residues. The segment covering 113–127 (SGNVNEESKTSNNKQ) has biased composition (polar residues). Basic and acidic residues predominate over residues 128–143 (VMEKTGIKEKREREKI). Positions 145–166 (VATTTYEDNVTPQTDDNFVSNS) are enriched in polar residues. A Phosphothreonine modification is found at threonine 187. Position 188 is a phosphoserine (serine 188). Residues 204-218 (STSPGKLTLSRNFTP) are compositionally biased toward polar residues. Residues 204-225 (STSPGKLTLSRNFTPTPVPKNK) form a disordered region.

The protein belongs to the ORC2 family. As to quaternary structure, component of the origin recognition complex (ORC) composed of at least ORC1, ORC2, ORC3, ORC4, ORC5 and ORC6. Interacts with MCM10 and TAH11.

Its subcellular location is the nucleus. Functionally, component of the origin recognition complex (ORC) that binds origins of replication. It has a role in both chromosomal replication and mating type transcriptional silencing. Binds to the ARS consensus sequence (ACS) of origins of replication. The polypeptide is Origin recognition complex subunit 2 (ORC2) (Saccharomyces cerevisiae (strain ATCC 204508 / S288c) (Baker's yeast)).